We begin with the raw amino-acid sequence, 507 residues long: Maturase K (507 aa).

This sequence belongs to the intron maturase 2 family. MatK subfamily.

It localises to the plastid. The protein resides in the chloroplast. Functionally, usually encoded in the trnK tRNA gene intron. Probably assists in splicing its own and other chloroplast group II introns. The polypeptide is Maturase K (Cryptomeria japonica (Japanese cedar)).